The sequence spans 741 residues: MLERKKPKTAENQKASEENEITQPGGSSAKPGLPCLNFEAVLSPDPALIHSTHSLTNSHAHTGSSDCDISCKGMTERIHSINLHNFSNSVLETLNEQRNRGHFCDVTVRIHGSMLRAHRCVLAAGSPFFQDKLLLGYSDIEIPSVVSVQSVQKLIDFMYSGVLRVSQSEALQILTAASILQIKTVIDECTRIVSQNVGDVFPGIQDSGQDTPRGTPESGTSGQSSDTESGYLQSHPQHSVDRIYSALYACSMQNGSGERSFYSGAVVSHHETALGLPRDHHMEDPSWITRIHERSQQMERYLSTTPETTHCRKQPRPVRIQTLVGNIHIKQEMEDDYDYYGQQRVQILERNESEECTEDTDQAEGTESEPKGESFDSGVSSSIGTEPDSVEQQFGPGAARDSQAEPTQPEQAAEAPAEGGPQTNQLETGASSPERSNEVEMDSTVITVSNSSDKSVLQQPSVNTSIGQPLPSTQLYLRQTETLTSNLRMPLTLTSNTQVIGTAGNTYLPALFTTQPAGSGPKPFLFSLPQPLAGQQTQFVTVSQPGLSTFTAQLPAPQPLASSAGHSTASGQGEKKPYECTLCNKTFTAKQNYVKHMFVHTGEKPHQCSICWRSFSLKDYLIKHMVTHTGVRAYQCSICNKRFTQKSSLNVHMRLHRGEKSYECYICKKKFSHKTLLERHVALHSASNGTPPAGTPPGARAGPPGVVACTEGTTYVCSVCPAKFDQIEQFNDHMRMHVSDG.

Over residues 1-17 (MLERKKPKTAENQKASE) the composition is skewed to basic and acidic residues. The tract at residues 1–32 (MLERKKPKTAENQKASEENEITQPGGSSAKPG) is disordered. The BTB domain maps to 104 to 167 (CDVTVRIHGS…MYSGVLRVSQ (64 aa)). The segment at 203–235 (GIQDSGQDTPRGTPESGTSGQSSDTESGYLQSH) is disordered. Residues 206–235 (DSGQDTPRGTPESGTSGQSSDTESGYLQSH) are compositionally biased toward polar residues. At Thr211 the chain carries Phosphothreonine. Lys330 is covalently cross-linked (Glycyl lysine isopeptide (Lys-Gly) (interchain with G-Cter in SUMO1); alternate). Residue Lys330 forms a Glycyl lysine isopeptide (Lys-Gly) (interchain with G-Cter in SUMO2); alternate linkage. The disordered stretch occupies residues 350-440 (RNESEECTED…SSPERSNEVE (91 aa)). At Ser353 the chain carries Phosphoserine. Over residues 354–367 (EECTEDTDQAEGTE) the composition is skewed to acidic residues. Residue Thr357 is modified to Phosphothreonine. Residue Lys371 forms a Glycyl lysine isopeptide (Lys-Gly) (interchain with G-Cter in SUMO2) linkage. Residues 404–423 (AEPTQPEQAAEAPAEGGPQT) are compositionally biased toward low complexity. Residues 424 to 434 (NQLETGASSPE) are compositionally biased toward polar residues. C2H2-type zinc fingers lie at residues 578–600 (YECT…MFVH), 606–628 (HQCS…MVTH), 634–656 (YQCS…MRLH), and 662–684 (YECY…VALH). Residues Thr690 and Thr695 each carry the phosphothreonine modification. The C2H2-type 5 zinc finger occupies 715–737 (YVCSVCPAKFDQIEQFNDHMRMH). A Glycyl lysine isopeptide (Lys-Gly) (interchain with G-Cter in SUMO2) cross-link involves residue Lys723.

In terms of assembly, can homodimerize. Binds to DNA. Post-translationally, sumoylated with SUMO1. In terms of tissue distribution, expressed in spleen, lymph node, thymus, peripheral blood leukocytes, and fetal liver.

The protein localises to the nucleus. Its function is as follows. May be a transcription factor that may be involved in hematopoiesis, oncogenesis, and immune responses. Plays a role in postnatal myogenesis, may be involved in the regulation of satellite cells self-renewal. The chain is Zinc finger and BTB domain-containing protein 20 (ZBTB20) from Homo sapiens (Human).